A 342-amino-acid chain; its full sequence is Holliday junction branch migration complex subunit RuvB (342 aa).

The tract at residues 1 to 185 is large ATPase domain (RuvB-L); the sequence is MRKDYLNSNK…FGINTRLAYY (185 aa). Residues leucine 24, arginine 25, glycine 66, lysine 69, threonine 70, threonine 71, 132 to 134, arginine 175, tyrosine 185, and arginine 222 each bind ATP; that span reads EDF. Threonine 70 contributes to the Mg(2+) binding site. The segment at 186–256 is small ATPAse domain (RuvB-S); sequence DVTLLTQIVK…IAQMALKALD (71 aa). Residues 259 to 342 form a head domain (RuvB-H) region; it reads EDGLDEMDNR…PPQRAGTLFE (84 aa). Residues arginine 314 and arginine 319 each contribute to the DNA site.

The protein belongs to the RuvB family. In terms of assembly, homohexamer. Forms an RuvA(8)-RuvB(12)-Holliday junction (HJ) complex. HJ DNA is sandwiched between 2 RuvA tetramers; dsDNA enters through RuvA and exits via RuvB. An RuvB hexamer assembles on each DNA strand where it exits the tetramer. Each RuvB hexamer is contacted by two RuvA subunits (via domain III) on 2 adjacent RuvB subunits; this complex drives branch migration. In the full resolvosome a probable DNA-RuvA(4)-RuvB(12)-RuvC(2) complex forms which resolves the HJ.

Its subcellular location is the cytoplasm. The catalysed reaction is ATP + H2O = ADP + phosphate + H(+). In terms of biological role, the RuvA-RuvB-RuvC complex processes Holliday junction (HJ) DNA during genetic recombination and DNA repair, while the RuvA-RuvB complex plays an important role in the rescue of blocked DNA replication forks via replication fork reversal (RFR). RuvA specifically binds to HJ cruciform DNA, conferring on it an open structure. The RuvB hexamer acts as an ATP-dependent pump, pulling dsDNA into and through the RuvAB complex. RuvB forms 2 homohexamers on either side of HJ DNA bound by 1 or 2 RuvA tetramers; 4 subunits per hexamer contact DNA at a time. Coordinated motions by a converter formed by DNA-disengaged RuvB subunits stimulates ATP hydrolysis and nucleotide exchange. Immobilization of the converter enables RuvB to convert the ATP-contained energy into a lever motion, pulling 2 nucleotides of DNA out of the RuvA tetramer per ATP hydrolyzed, thus driving DNA branch migration. The RuvB motors rotate together with the DNA substrate, which together with the progressing nucleotide cycle form the mechanistic basis for DNA recombination by continuous HJ branch migration. Branch migration allows RuvC to scan DNA until it finds its consensus sequence, where it cleaves and resolves cruciform DNA. The sequence is that of Holliday junction branch migration complex subunit RuvB from Amoebophilus asiaticus (strain 5a2).